The sequence spans 320 residues: Aspartate carbamoyltransferase catalytic subunit (320 aa).

Residues R65 and T66 each coordinate carbamoyl phosphate. K93 is an L-aspartate binding site. The carbamoyl phosphate site is built by R115, H143, and Q146. L-aspartate contacts are provided by R176 and R230. Residues G271 and P272 each coordinate carbamoyl phosphate.

It belongs to the aspartate/ornithine carbamoyltransferase superfamily. ATCase family. As to quaternary structure, heterododecamer (2C3:3R2) of six catalytic PyrB chains organized as two trimers (C3), and six regulatory PyrI chains organized as three dimers (R2).

The enzyme catalyses carbamoyl phosphate + L-aspartate = N-carbamoyl-L-aspartate + phosphate + H(+). The protein operates within pyrimidine metabolism; UMP biosynthesis via de novo pathway; (S)-dihydroorotate from bicarbonate: step 2/3. In terms of biological role, catalyzes the condensation of carbamoyl phosphate and aspartate to form carbamoyl aspartate and inorganic phosphate, the committed step in the de novo pyrimidine nucleotide biosynthesis pathway. The protein is Aspartate carbamoyltransferase catalytic subunit of Maricaulis maris (strain MCS10) (Caulobacter maris).